A 335-amino-acid polypeptide reads, in one-letter code: Acetyl-coenzyme A carboxylase carboxyl transferase subunit alpha (335 aa).

The 255-residue stretch at Gln-40 to Glu-294 folds into the CoA carboxyltransferase C-terminal domain.

This sequence belongs to the AccA family. In terms of assembly, acetyl-CoA carboxylase is a heterohexamer composed of biotin carboxyl carrier protein (AccB), biotin carboxylase (AccC) and two subunits each of ACCase subunit alpha (AccA) and ACCase subunit beta (AccD).

It is found in the cytoplasm. The enzyme catalyses N(6)-carboxybiotinyl-L-lysyl-[protein] + acetyl-CoA = N(6)-biotinyl-L-lysyl-[protein] + malonyl-CoA. Its pathway is lipid metabolism; malonyl-CoA biosynthesis; malonyl-CoA from acetyl-CoA: step 1/1. In terms of biological role, component of the acetyl coenzyme A carboxylase (ACC) complex. First, biotin carboxylase catalyzes the carboxylation of biotin on its carrier protein (BCCP) and then the CO(2) group is transferred by the carboxyltransferase to acetyl-CoA to form malonyl-CoA. The chain is Acetyl-coenzyme A carboxylase carboxyl transferase subunit alpha from Prochlorococcus marinus subsp. pastoris (strain CCMP1986 / NIES-2087 / MED4).